The sequence spans 393 residues: tRNA(Met) cytidine acetate ligase (393 aa).

ATP contacts are provided by Gly-81, Asn-142, and Arg-167.

The protein belongs to the TmcAL family.

Its subcellular location is the cytoplasm. It carries out the reaction cytidine(34) in elongator tRNA(Met) + acetate + ATP = N(4)-acetylcytidine(34) in elongator tRNA(Met) + AMP + diphosphate. Functionally, catalyzes the formation of N(4)-acetylcytidine (ac(4)C) at the wobble position of elongator tRNA(Met), using acetate and ATP as substrates. First activates an acetate ion to form acetyladenylate (Ac-AMP) and then transfers the acetyl group to tRNA to form ac(4)C34. The sequence is that of tRNA(Met) cytidine acetate ligase from Bacillus thuringiensis subsp. konkukian (strain 97-27).